The following is a 468-amino-acid chain: tRNA (guanine(37)-N(1))-methyltransferase 1 (468 aa).

Residues His-207, 245-246, and 273-274 each bind S-adenosyl-L-methionine; these read DL and DA. The segment at 301–348 is disordered; that stretch reads KEAAVSRGGETNSSGEEIRESNASINEPLGANKKPSGTTKTENGVGKD. Positions 309 to 325 are enriched in polar residues; that stretch reads GETNSSGEEIRESNASI. Asn-380 is a binding site for S-adenosyl-L-methionine.

This sequence belongs to the class I-like SAM-binding methyltransferase superfamily. TRM5/TYW2 family. As to quaternary structure, monomer.

It is found in the mitochondrion matrix. It localises to the nucleus. The protein resides in the cytoplasm. The enzyme catalyses guanosine(37) in tRNA + S-adenosyl-L-methionine = N(1)-methylguanosine(37) in tRNA + S-adenosyl-L-homocysteine + H(+). Specifically methylates the N1 position of guanosine-37 in various cytoplasmic and mitochondrial tRNAs. Methylation is not dependent on the nature of the nucleoside 5' of the target nucleoside. This is the first step in the biosynthesis of wybutosine (yW), a modified base adjacent to the anticodon of tRNAs and required for accurate decoding. The chain is tRNA (guanine(37)-N(1))-methyltransferase 1 from Arabidopsis thaliana (Mouse-ear cress).